The following is a 127-amino-acid chain: Small ribosomal subunit protein uS11 (127 aa).

The protein belongs to the universal ribosomal protein uS11 family. As to quaternary structure, part of the 30S ribosomal subunit. Interacts with proteins S7 and S18. Binds to IF-3.

In terms of biological role, located on the platform of the 30S subunit, it bridges several disparate RNA helices of the 16S rRNA. Forms part of the Shine-Dalgarno cleft in the 70S ribosome. In Chlorobium luteolum (strain DSM 273 / BCRC 81028 / 2530) (Pelodictyon luteolum), this protein is Small ribosomal subunit protein uS11.